A 131-amino-acid polypeptide reads, in one-letter code: Small ribosomal subunit protein eS8 (131 aa).

The tract at residues 15–36 is disordered; it reads PSGGKKGRVRKTKKKALGGGPP. A compositionally biased stretch (basic residues) spans 17-30; sequence GGKKGRVRKTKKKA.

Belongs to the eukaryotic ribosomal protein eS8 family. In terms of assembly, part of the 30S ribosomal subunit.

In Pyrobaculum calidifontis (strain DSM 21063 / JCM 11548 / VA1), this protein is Small ribosomal subunit protein eS8.